Here is a 375-residue protein sequence, read N- to C-terminus: MENFPTEYFLNTSVRLLEYIRYRDSNYTREERIENLHYAYNKAAHHFAQPRQQKMLKVDPKRLQASLQTIVGMVVYSWAKVSKECMADLSIHYTYTLVLDDSSDDPHPAMLNYFDDLQAGREQAHPWWALVNEHFPNVLRHFGPFCSLNLIRSTMDFFEGCWIEQYNFGGFPGSDDYPQFLRRMNGLGHCVGASLWPKDLFDERKHFLEITSAVAQMENWMVWVNDLMSFYKEFDDERDQISLVKNFVTCHEITLDEALEKLTQETLHSSKQMVAVFSDKDPQVMDTIECFMHGYVTWHLCDARYRLHEIYEKVKDQDTEDAKKFCKFFEQAANVGAVAPSEWAYPQVAQLANVRAKDDVKEAHKPILSSIELVE.

The protein belongs to the trichodiene synthase family.

It carries out the reaction (2E,6E)-farnesyl diphosphate = trichodiene + diphosphate. The protein operates within sesquiterpene biosynthesis; trichothecene biosynthesis. TS is a member of the terpene cyclase group of enzymes. It catalyzes the isomerization and cyclization of farnesyl pyro-phosphate to form trichodiene, the first cyclic intermediate in the biosynthetic pathway for trichothecenes. It serves to branch trichothecene biosynthesis from the isoprenoid pathway. The chain is Trichodiene synthase (TRI5) from Fusarium acaciae-mearnsii.